We begin with the raw amino-acid sequence, 376 residues long: T-box transcription factor 18 (376 aa).

A compositionally biased stretch (low complexity) spans 38–63 (STSRPSSSSPPSLPAVSSELLSSSFP). The interval 38–76 (STSRPSSSSPPSLPAVSSELLSSSFPTNAPESSSRDLAP) is disordered. The segment at residues 171–364 (LANQEQWAKF…GNKYCRTDRK (194 aa)) is a DNA-binding region (T-box).

The protein resides in the nucleus. Functionally, transcriptional regulator involved in developmental processes. Directly binds to the promoter region of the sex-determining factor xol-1 to activate its transcription. Its activation of xol-1 transcription controls sex determination and X chromosome dosage compensation to promote male development. Has a role in the fox-1-sex-1-mediated determination of sexual fate. This is T-box transcription factor 18 from Caenorhabditis elegans.